Here is a 111-residue protein sequence, read N- to C-terminus: MSEHVRTRSQSSERGNDQESSQPVGSVIVQEPTEEKRQEEEPPTDNQGIAPSGEIENEGAPAVQGPDMEAFQQELALLKIEDEPGDGPDVREGIMPTFDLTKVLEAGDAQP.

The disordered stretch occupies residues 1 to 67; the sequence is MSEHVRTRSQ…EGAPAVQGPD (67 aa). Over residues 8-24 the composition is skewed to polar residues; that stretch reads RSQSSERGNDQESSQPV. At Thr97 the chain carries Phosphothreonine.

Belongs to the GAGE family.

The polypeptide is Putative G antigen family E member 3 (PAGE2B) (Homo sapiens (Human)).